The sequence spans 361 residues: Peptide chain release factor 1 (361 aa).

Q235 carries the N5-methylglutamine modification.

The protein belongs to the prokaryotic/mitochondrial release factor family. Methylated by PrmC. Methylation increases the termination efficiency of RF1.

The protein localises to the cytoplasm. Peptide chain release factor 1 directs the termination of translation in response to the peptide chain termination codons UAG and UAA. In Xanthomonas oryzae pv. oryzae (strain MAFF 311018), this protein is Peptide chain release factor 1.